Here is a 38-residue protein sequence, read N- to C-terminus: Odorant-binding protein 2 (38 aa).

Belongs to the calycin superfamily. Lipocalin family. Nasal mucosa.

The protein localises to the secreted. It localises to the extracellular space. Functionally, this soluble protein may play a specific role in odor discrimination and perception. In Hystrix cristata (North African crested porcupine), this protein is Odorant-binding protein 2.